The sequence spans 666 residues: Calmodulin-binding receptor kinase CaMRLK (666 aa).

An N-terminal signal peptide occupies residues 1–17 (MFLKLFLLLSLVSFSHS). Residues 18 to 297 (DSSSTVSCPN…KTHRTNHTPL (280 aa)) are Extracellular-facing. N-linked (GlcNAc...) asparagine glycans are attached at residues N27, N45, N52, N68, N78, N89, N110, N126, N137, N148, N154, N189, N212, N229, and N261. 7 LRR repeats span residues 79 to 103 (LTRLRVLDLSNNSLDGSLPTWLWSM), 105 to 127 (GLVSVNLSRNRFGGSIRVIPVNG), 130 to 152 (LSAVKELNLSFNRFKHAVNFTGF), 153 to 177 (TNLTTLDLSHNSLGVLPLGLGSLSG), 178 to 197 (LRHLDISRCKINGSVKPISG), 198 to 224 (LKSLDYLDLSENSMNGSFPVDFPNLNH), and 226 to 246 (QFLNLSANRFSGSVGFDKYRK). The helical transmembrane segment at 298-318 (VIGLSSSLGALIIVIFAAAII) threads the bilayer. The interval 319-337 (LIRRRMKSARTKSRWAISN) is calmodulin binding. The Cytoplasmic segment spans residues 319 to 666 (LIRRRMKSAR…LLKDIRTVSR (348 aa)). In terms of domain architecture, Protein kinase spans 395 to 661 (FGTESVISDG…QQVLGLLKDI (267 aa)). Residues 401-409 (ISDGTCGPL) and K423 each bind ATP.

The protein belongs to the protein kinase superfamily. Ser/Thr protein kinase family. As to quaternary structure, binds calmodulin (CaM) in a calcium-dependent manner. Interacts with CAM1, but not with CAM8. Mn(2+) serves as cofactor. It depends on Mg(2+) as a cofactor. In terms of processing, calmodulin (CaM)-independent autophosphorylation. As to expression, expressed in reproductive and vegetative tissues, with higher levels in seedlings and flowers, but not in leaves.

It localises to the cell membrane. The enzyme catalyses L-seryl-[protein] + ATP = O-phospho-L-seryl-[protein] + ADP + H(+). It catalyses the reaction L-threonyl-[protein] + ATP = O-phospho-L-threonyl-[protein] + ADP + H(+). With respect to regulation, not stimulated by calmodulin (CaM). In terms of biological role, can phosphorylate the myelin basic protein in vitro. Required for endosperm development in embryos. Maybe involved in auxin and osmotic stress responses. The protein is Calmodulin-binding receptor kinase CaMRLK of Arabidopsis thaliana (Mouse-ear cress).